The sequence spans 241 residues: Nopaline transport system permease protein NocM (241 aa).

Positions 17–215 constitute an ABC transmembrane type-1 domain; that stretch reads VPTTLTLAFI…FITFVVSRLV (199 aa). A run of 5 helical transmembrane segments spans residues 21–41, 52–72, 95–115, 161–181, and 191–211; these read LTLA…VALM, LAYG…MFLI, PWFC…SEII, VMLI…EVTG, and YSPV…TFVV.

Belongs to the binding-protein-dependent transport system permease family. HisMQ subfamily.

Its subcellular location is the cell inner membrane. Functionally, component of the nopaline active transport system probably consisting of four subunits: Q, M, P and T. This system is also capable of transporting octopine provided that catabolic functions are induced with nopaline. The chain is Nopaline transport system permease protein NocM (nocM) from Agrobacterium fabrum (strain C58 / ATCC 33970) (Agrobacterium tumefaciens (strain C58)).